The chain runs to 496 residues: Cobyric acid synthase (496 aa).

A GATase cobBQ-type domain is found at 256–444 (KINIAVVLLR…IHGILDNQAF (189 aa)). Cys337 (nucleophile) is an active-site residue. Residue His436 is part of the active site.

It belongs to the CobB/CobQ family. CobQ subfamily.

The protein operates within cofactor biosynthesis; adenosylcobalamin biosynthesis. Catalyzes amidations at positions B, D, E, and G on adenosylcobyrinic A,C-diamide. NH(2) groups are provided by glutamine, and one molecule of ATP is hydrogenolyzed for each amidation. The polypeptide is Cobyric acid synthase (Phocaeicola vulgatus (strain ATCC 8482 / DSM 1447 / JCM 5826 / CCUG 4940 / NBRC 14291 / NCTC 11154) (Bacteroides vulgatus)).